A 164-amino-acid polypeptide reads, in one-letter code: Phosphopantetheine adenylyltransferase (164 aa).

Ser-9 lines the substrate pocket. Residues 9 to 10 (SF) and His-17 each bind ATP. Lys-41, Leu-73, and Lys-87 together coordinate substrate. ATP-binding positions include 88-90 (GLR), Glu-98, and 122-128 (YSYLSSS).

The protein belongs to the bacterial CoaD family. Homohexamer. Requires Mg(2+) as cofactor.

The protein localises to the cytoplasm. The enzyme catalyses (R)-4'-phosphopantetheine + ATP + H(+) = 3'-dephospho-CoA + diphosphate. The protein operates within cofactor biosynthesis; coenzyme A biosynthesis; CoA from (R)-pantothenate: step 4/5. Reversibly transfers an adenylyl group from ATP to 4'-phosphopantetheine, yielding dephospho-CoA (dPCoA) and pyrophosphate. This chain is Phosphopantetheine adenylyltransferase, found in Rhodococcus opacus (strain B4).